Consider the following 559-residue polypeptide: Serine/threonine-protein kinase VRK1 (559 aa).

In terms of domain architecture, Protein kinase spans 32–388 (YIVGKQFATG…EDDDEEEEVI (357 aa)). ATP contacts are provided by residues 38–46 (FATGGFGRI) and K61. D167 functions as the Proton acceptor in the catalytic mechanism. 2 disordered regions span residues 315–419 (EAAQ…ATSD) and 448–559 (SSCE…SSEV). Polar residues-rich tracts occupy residues 405–418 (RSFNLGMTSSTATS) and 449–460 (SCESQYESNEPG). Residues 533–542 (TSARYQEKRA) are compositionally biased toward basic and acidic residues. Polar residues predominate over residues 545-559 (NTKPTFDDSSCSSEV).

This sequence belongs to the protein kinase superfamily. CK1 Ser/Thr protein kinase family. VRK subfamily. In terms of processing, autophosphorylates in vitro.

It is found in the nucleus. It localises to the cytoplasm. Its subcellular location is the cajal body. It carries out the reaction L-seryl-[protein] + ATP = O-phospho-L-seryl-[protein] + ADP + H(+). It catalyses the reaction L-threonyl-[protein] + ATP = O-phospho-L-threonyl-[protein] + ADP + H(+). In terms of biological role, serine/threonine kinase that phosphorylates baf-1, thus regulating the association of baf-1 with chromatin and nuclear membrane proteins during nuclear envelope formation. May act through the egl-17 signaling pathway. Essential in hermaphrodites for formation of the vulva, uterus, and uterine seam cells and for development and maintenance of the somatic gonad and thus the germ line. Acts to prevent cep-1 from triggering an inappropriate cell cycle arrest, thereby promoting germ cell proliferation. Regulates anchor cell polarity and the timing of anchor cell invasion through the basement membranes separating vulval and somatic gonadal cells during the L3 larval stage. The protein is Serine/threonine-protein kinase VRK1 of Caenorhabditis briggsae.